Reading from the N-terminus, the 410-residue chain is Peptidase T (410 aa).

Residue His78 coordinates Zn(2+). Residue Asp80 is part of the active site. Asp139 contacts Zn(2+). The active-site Proton acceptor is the Glu173. 3 residues coordinate Zn(2+): Glu174, Asp196, and His378.

This sequence belongs to the peptidase M20B family. Requires Zn(2+) as cofactor.

Its subcellular location is the cytoplasm. The enzyme catalyses Release of the N-terminal residue from a tripeptide.. In terms of biological role, cleaves the N-terminal amino acid of tripeptides. This is Peptidase T from Shewanella woodyi (strain ATCC 51908 / MS32).